A 572-amino-acid polypeptide reads, in one-letter code: MAFNFNWSPLMADASFYTRAQDLLTAALNKSPKPPIIVDDIIVTELNLGSIPPELEILEIGDLAEDRFRGIFKMSYSGDAFLTLKTRVQANPLNTYLLTRPSFATPRPLAAATPLTIPLQITLSDFKLSGFVILVFSKQKGITVVFRNDPLESLKVSSTFDSIPFVRDFLQKEIEAQLRILFMDELPAIIHRLSLRLWVPEYRAGEELQTQTESANGEGPGQDPLASPPQDPVDALGNALNESEIESLSLDSSVETHSLFSQKNLLRLAALTDSQRTLSLFTPSIREVVYRAWTSPSDQTDASGGVTSPFSPVLSRTQSQVGSMSSFPDSASMVSNQSRSSTPSHTFSGYGLSLGAGRHSKAHARKRKKRVVDLRRPKTTDDAPSVSDESAFTESTSTPSICSAPMPVLDEQTDDPVTPPLSPDRDLHLPAIPERHGMSISRPALRREIASEMIRDTAESKPSSNPVGQAIQDEDLSATPRAAVRAHGASVLEKEKQATGSSAGSSRQLPSTILPFINDSPTGRVVDQALVERLAGEIARRMRDEKFLASNACGPFWDRHSQEESPPPAYGH.

Positions 1 to 195 (MAFNFNWSPL…LPAIIHRLSL (195 aa)) constitute an SMP-LTD domain. 4 disordered regions span residues 208–236 (LQTQ…VDAL), 296–405 (PSDQ…CSAP), 455–518 (RDTA…PFIN), and 551–572 (NACG…AYGH). Residues 296 to 347 (PSDQTDASGGVTSPFSPVLSRTQSQVGSMSSFPDSASMVSNQSRSSTPSHTF) show a composition bias toward polar residues. Residues 358-370 (RHSKAHARKRKKR) show a composition bias toward basic residues. A compositionally biased stretch (basic and acidic residues) spans 371–381 (VVDLRRPKTTD). Polar residues-rich tracts occupy residues 387 to 401 (SDES…TPSI) and 498 to 511 (ATGS…QLPS).

It belongs to the MDM34 family. In terms of assembly, component of the ER-mitochondria encounter structure (ERMES) or MDM complex, composed of mmm1, mdm10, mdm12 and mdm34.

Its subcellular location is the mitochondrion outer membrane. Component of the ERMES/MDM complex, which serves as a molecular tether to connect the endoplasmic reticulum (ER) and mitochondria. Components of this complex are involved in the control of mitochondrial shape and protein biogenesis, and function in nonvesicular lipid trafficking between the ER and mitochondria. Mdm34 is required for the interaction of the ER-resident membrane protein mmm1 and the outer mitochondrial membrane-resident beta-barrel protein mdm10. The polypeptide is Mitochondrial distribution and morphology protein 34 (Neosartorya fischeri (strain ATCC 1020 / DSM 3700 / CBS 544.65 / FGSC A1164 / JCM 1740 / NRRL 181 / WB 181) (Aspergillus fischerianus)).